The primary structure comprises 567 residues: Urease subunit alpha (567 aa).

In terms of domain architecture, Urease spans glycine 129 to phenylalanine 567. Ni(2+) contacts are provided by histidine 134, histidine 136, and lysine 217. An N6-carboxylysine modification is found at lysine 217. Histidine 219 lines the substrate pocket. Residues histidine 246 and histidine 272 each contribute to the Ni(2+) site. Histidine 320 acts as the Proton donor in catalysis. Aspartate 360 is a Ni(2+) binding site.

The protein belongs to the metallo-dependent hydrolases superfamily. Urease alpha subunit family. As to quaternary structure, heterotrimer of UreA (gamma), UreB (beta) and UreC (alpha) subunits. Three heterotrimers associate to form the active enzyme. It depends on Ni cation as a cofactor. In terms of processing, carboxylation allows a single lysine to coordinate two nickel ions.

It localises to the cytoplasm. The enzyme catalyses urea + 2 H2O + H(+) = hydrogencarbonate + 2 NH4(+). It participates in nitrogen metabolism; urea degradation; CO(2) and NH(3) from urea (urease route): step 1/1. In Proteus hauseri, this protein is Urease subunit alpha.